Here is a 42-residue protein sequence, read N- to C-terminus: Photosystem II reaction center protein J (42 aa).

A helical membrane pass occupies residues 10–30; that stretch reads IPLWLVGTVVGTLALGLVALF.

Belongs to the PsbJ family. In terms of assembly, PSII is composed of 1 copy each of membrane proteins PsbA, PsbB, PsbC, PsbD, PsbE, PsbF, PsbH, PsbI, PsbJ, PsbK, PsbL, PsbM, PsbT, PsbX, PsbY, PsbZ, Psb30/Ycf12, at least 3 peripheral proteins of the oxygen-evolving complex and a large number of cofactors. It forms dimeric complexes.

The protein resides in the plastid. It is found in the chloroplast thylakoid membrane. Its function is as follows. One of the components of the core complex of photosystem II (PSII). PSII is a light-driven water:plastoquinone oxidoreductase that uses light energy to abstract electrons from H(2)O, generating O(2) and a proton gradient subsequently used for ATP formation. It consists of a core antenna complex that captures photons, and an electron transfer chain that converts photonic excitation into a charge separation. The polypeptide is Photosystem II reaction center protein J (Oltmannsiellopsis viridis (Marine flagellate)).